Consider the following 445-residue polypeptide: N-succinylarginine dihydrolase (445 aa).

Substrate-binding positions include A19–S28, N110, and H137–R138. E174 is a catalytic residue. Residue R214 coordinates substrate. The active site involves H250. Substrate is bound by residues D252 and N363. C369 functions as the Nucleophile in the catalytic mechanism.

It belongs to the succinylarginine dihydrolase family. As to quaternary structure, homodimer.

The enzyme catalyses N(2)-succinyl-L-arginine + 2 H2O + 2 H(+) = N(2)-succinyl-L-ornithine + 2 NH4(+) + CO2. The protein operates within amino-acid degradation; L-arginine degradation via AST pathway; L-glutamate and succinate from L-arginine: step 2/5. Functionally, catalyzes the hydrolysis of N(2)-succinylarginine into N(2)-succinylornithine, ammonia and CO(2). The protein is N-succinylarginine dihydrolase of Shewanella pealeana (strain ATCC 700345 / ANG-SQ1).